Here is a 276-residue protein sequence, read N- to C-terminus: Putative translation initiation factor eIF-2B subunit 2-like (276 aa).

The protein belongs to the eIF-2B alpha/beta/delta subunits family. As to quaternary structure, complex of two different subunits.

Catalyzes the exchange of initiation factor 2-bound GDP for GTP. This chain is Putative translation initiation factor eIF-2B subunit 2-like, found in Pyrococcus abyssi (strain GE5 / Orsay).